Reading from the N-terminus, the 1073-residue chain is MRRELFIFLLLLGECANVKVKVGHIGAVGSMRNAEKILQLSKEQLTQEGVLGNDFDIEILNQMGCGESYEGVAVGADMYHVQGVRAFIGPYCNAELDAVAKMATFWNIPVVGYMASSNSFADKTIFKTLARVSLRTTNSLAEAAAALIKHYGWNKVAIATNTGAVAFERVQSFEEVFHQRGINVVRKIMLEEYTNAKAIMNSGLLQELENSARVVVCAFSSTRDMNKEFMQAVTLSGMNNANYAWILPWLQLETKDMAPWLGENGEYQQNVKDHFANSFIIDDVNGFDNTLVTPFKERLEASGYSTDDLEMKNIYGYIHLYDALRLYALAVRATMNETGNENSYLNGKEVWNHMRRITFPGLVSNAGVTSGTVMMDDIAERAPVYAAFYVPPNSDTVRKVCELEPVMLTNCDGTKTGNGCYELQVTDLSTGFWPSIDGSLPADEPACGFRNEKCDYTTLIIGGCIVLLIILLIICFFILSRVCENRALANTPWRIYRDDFRTIQENEMKSMLSIGSSKTKMSNMSMFVKHHAVVGTNTHASFHLYPQRRPIVFNRQDLQLLNQMKQAVHDNLNPFLGMSFNEKEEMVVLWKFCSRGTIQDMIYNQEVSLDSKFHGAFIRDITLGLEYLHSSIIGYHGSLTPWSCLIDRNWMIKLTDYGIANPLERWEKLGLISTETLKEGDDKSGSAQKTSLLYQPPEMLKNKESNRTRRMDQSWVKQSQARRQMGDIYAFGMVMHEILFRALPFPNGTNVSEVMDYIRDGTKTFRPTVHDRTQIHPDLVALLLDCWNENPEVRPSIRRVRLNTENYLKVKGSLVDQMMRMMEQYANNLEKLVAERTGMLEEANVRADKLLGQLLPKYVANELKMGRSVPAKTFDMATVMFSDIVGFTTICSSSTPLEVVSMLNSIYSKFDDAINKHGSYKVETIGDAYMIVSGIPEENGNEHIRNICNTALELMLLLKTYEIPHRRNVKLRIRLGIHTGTVAAGVVGLTAPRYCLFGDTVNVASRMESTSEPEKIQMSQEARDFCVRYYSEFQITLRGTVEAKGKGPVTSYWLLGKQSESQMQQQNFSQLGI.

Residues 1 to 15 (MRRELFIFLLLLGEC) form the signal peptide. Residues 16-458 (ANVKVKVGHI…FRNEKCDYTT (443 aa)) are Extracellular-facing. Asn336 carries N-linked (GlcNAc...) asparagine glycosylation. A helical transmembrane segment spans residues 459-479 (LIIGGCIVLLIILLIICFFIL). The Cytoplasmic segment spans residues 480-1073 (SRVCENRALA…QQQNFSQLGI (594 aa)). One can recognise a Protein kinase domain in the interval 508–808 (MKSMLSIGSS…RVRLNTENYL (301 aa)). Positions 813–844 (SLVDQMMRMMEQYANNLEKLVAERTGMLEEAN) form a coiled coil. The region spanning 878–1008 (TVMFSDIVGF…DTVNVASRME (131 aa)) is the Guanylate cyclase domain. Mg(2+)-binding residues include Asp883, Ile884, and Asp927.

Belongs to the adenylyl cyclase class-4/guanylyl cyclase family. As to expression, expressed specifically in AFD sensory neurons.

The protein localises to the cell membrane. The protein resides in the cell projection. It is found in the cilium. The catalysed reaction is GTP = 3',5'-cyclic GMP + diphosphate. Guanylate cyclase involved in the production of the second messenger cGMP. Regulates thermotaxis responses in AFD sensory neurons. May regulate AFD neuronal activity such as calcium responses to temperature gradients. In Caenorhabditis elegans, this protein is Receptor-type guanylate cyclase gcy-23.